We begin with the raw amino-acid sequence, 360 residues long: Terpene synthase 5 (360 aa).

Residues 87 to 92 (DDFLER) carry the DDxx(x)D/E motif motif. The NDxxSxxxD/E motif signature appears at 237-245 (NDCVSYAKE).

It belongs to the terpene synthase family.

In terms of biological role, terpene synthase that converts its substrate farnesyl diphosphate (FPP) into 2 yet unidentified sesquiterpenes. The polypeptide is Terpene synthase 5 (Dictyostelium purpureum (Slime mold)).